The sequence spans 105 residues: Large ribosomal subunit protein eL30 (105 aa).

The protein belongs to the eukaryotic ribosomal protein eL30 family.

This is Large ribosomal subunit protein eL30 (rpl30e) from Methanococcus vannielii (strain ATCC 35089 / DSM 1224 / JCM 13029 / OCM 148 / SB).